The following is a 368-amino-acid chain: DNA replication and repair protein RecF (368 aa).

Position 30 to 37 (30 to 37 (GDNGAGKT)) interacts with ATP.

It belongs to the RecF family.

The protein resides in the cytoplasm. Its function is as follows. The RecF protein is involved in DNA metabolism; it is required for DNA replication and normal SOS inducibility. RecF binds preferentially to single-stranded, linear DNA. It also seems to bind ATP. This Xanthomonas axonopodis pv. citri (strain 306) protein is DNA replication and repair protein RecF.